The sequence spans 60 residues: Toxin 5 (60 aa).

4 disulfides stabilise this stretch: C3–C22, C17–C39, C41–C52, and C53–C58.

Belongs to the three-finger toxin family. Short-chain subfamily. Type I alpha-neurotoxin sub-subfamily. Expressed by the venom gland.

It localises to the secreted. Binds to muscle nicotinic acetylcholine receptor (nAChR) and inhibit acetylcholine from binding to the receptor, thereby impairing neuromuscular transmission. This is Toxin 5 from Hydrophis schistosus (Beaked sea snake).